The primary structure comprises 161 residues: 18.1 kDa class I heat shock protein (161 aa).

A sHSP domain is found at 45–160 (DVAAFTNARV…QVKSIDISGA (116 aa)).

The protein belongs to the small heat shock protein (HSP20) family. May form oligomeric structures. Binds to AKR2A.

Its subcellular location is the cytoplasm. The polypeptide is 18.1 kDa class I heat shock protein (HSP18.1) (Arabidopsis thaliana (Mouse-ear cress)).